A 154-amino-acid polypeptide reads, in one-letter code: Histone H2B.v3 (154 aa).

Basic residues predominate over residues 1 to 11 (MVFVKGQKKAT). Residues 1 to 48 (MVFVKGQKKATKGSTQSGEEKTASTTPKVTKTPTEGGEKKRKKRKSDY) are disordered. The segment covering 12–27 (KGSTQSGEEKTASTTP) has biased composition (polar residues).

Belongs to the histone H2B family. As to quaternary structure, the nucleosome is a histone octamer containing two molecules each of H2A, H2B, H3 and H4 assembled in one H3-H4 heterotetramer and two H2A-H2B heterodimers. The octamer wraps approximately 147 bp of DNA.

The protein localises to the nucleus. It is found in the chromosome. Functionally, core component of nucleosome which plays a central role in DNA double strand break (DSB) repair. Nucleosomes wrap and compact DNA into chromatin, limiting DNA accessibility to the cellular machineries which require DNA as a template. Histones thereby play a central role in transcription regulation, DNA repair, DNA replication and chromosomal stability. DNA accessibility is regulated via a complex set of post-translational modifications of histones, also called histone code, and nucleosome remodeling. The polypeptide is Histone H2B.v3 (H2Bv3) (Dictyostelium discoideum (Social amoeba)).